Here is a 310-residue protein sequence, read N- to C-terminus: Iron ABC transporter substrate-binding lipoprotein MtsA (310 aa).

An N-terminal signal peptide occupies residues 1–20 (MGKKMSLILGAFLSVFLLVA). The N-palmitoyl cysteine moiety is linked to residue Cys-21. The S-diacylglycerol cysteine moiety is linked to residue Cys-21. Fe(2+) is bound by residues His-68, His-140, Glu-206, and Asp-281.

This sequence belongs to the bacterial solute-binding protein 9 family. Lipoprotein receptor antigen (Lrai) subfamily.

It is found in the cell membrane. Its function is as follows. Part of the ATP-binding cassette (ABC) transport system MtsABC involved in iron import. Binds iron with high affinity and specificity and delivers it to the membrane permease for translocation into the cytoplasm. Has low affinity for Zn(2+) and Cu(2+). This chain is Iron ABC transporter substrate-binding lipoprotein MtsA (mtsA), found in Streptococcus pyogenes serotype M6 (strain ATCC BAA-946 / MGAS10394).